We begin with the raw amino-acid sequence, 560 residues long: Glutamine--tRNA ligase (560 aa).

Residues 36–46 carry the 'HIGH' region motif; it reads PEPNGFAHIGH. ATP is bound by residues 37-39 and 43-49; these read EPN and HIGHAKA. Residues aspartate 69 and tyrosine 214 each contribute to the L-glutamine site. An ATP-binding site is contributed by 263–264; it reads RL. A 'KMSKS' region motif is present at residues 270–274; it reads LTSKR.

This sequence belongs to the class-I aminoacyl-tRNA synthetase family. In terms of assembly, monomer.

It localises to the cytoplasm. The enzyme catalyses tRNA(Gln) + L-glutamine + ATP = L-glutaminyl-tRNA(Gln) + AMP + diphosphate. The chain is Glutamine--tRNA ligase from Chromobacterium violaceum (strain ATCC 12472 / DSM 30191 / JCM 1249 / CCUG 213 / NBRC 12614 / NCIMB 9131 / NCTC 9757 / MK).